The primary structure comprises 464 residues: UPF0210 protein Cgl1545/cg1743 (464 aa).

This sequence belongs to the UPF0210 family. As to quaternary structure, homodimer.

The protein is UPF0210 protein Cgl1545/cg1743 of Corynebacterium glutamicum (strain ATCC 13032 / DSM 20300 / JCM 1318 / BCRC 11384 / CCUG 27702 / LMG 3730 / NBRC 12168 / NCIMB 10025 / NRRL B-2784 / 534).